We begin with the raw amino-acid sequence, 1137 residues long: UDP-N-acetylglucosamine transferase subunit ALG13 (1137 aa).

Positions 1–125 (MKCVFVTVGT…LHKEGHLFYC (125 aa)) are glycosyltransferase activity. Residues 126–400 (TCRVLTCPGQ…GSKKNRNNAV (275 aa)) form a deubiquitinase activity region. The OTU domain occupies 231 to 352 (LFRKLTAKDA…SGHYDSVYSK (122 aa)). Asp-239 (for deubiquitinase activity) is an active-site residue. The Nucleophile; for deubiquitinase activity role is filled by Cys-242. Catalysis depends on His-345, which acts as the For deubiquitinase activity. The Tudor domain maps to 492–552 (QYYLGDKCQV…KPVTQVMSVP (61 aa)). Disordered stretches follow at residues 641–660 (HFHP…MPRN) and 911–974 (IPHA…SGSD). Composition is skewed to pro residues over residues 918-946 (LPPP…PPPA) and 956-967 (QPPPPLPPPPYS).

This sequence belongs to the glycosyltransferase 28 family. As to quaternary structure, forms with ALG14 the active heterodimeric UDP-N-acetylglucosamine transferase complex. Not able to interact with ALG14 to form an active UDP-N-acetylglucosamine transferase complex.

It localises to the endoplasmic reticulum membrane. It carries out the reaction an N-acetyl-alpha-D-glucosaminyl-diphospho-di-trans,poly-cis-dolichol + UDP-N-acetyl-alpha-D-glucosamine = an N,N'-diacetylchitobiosyl-diphospho-di-trans,poly-cis-dolichol + UDP + H(+). The protein operates within protein modification; protein glycosylation. Its function is as follows. Catalytic subunit of the UDP-N-acetylglucosamine transferase complex that operates in the biosynthetic pathway of dolichol-linked oligosaccharides, the glycan precursors employed in protein asparagine (N)-glycosylation. The assembly of dolichol-linked oligosaccharides begins on the cytosolic side of the endoplasmic reticulum membrane and finishes in its lumen. The sequential addition of sugars to dolichol pyrophosphate produces dolichol-linked oligosaccharides containing fourteen sugars, including two GlcNAcs, nine mannoses and three glucoses. Once assembled, the oligosaccharide is transferred from the lipid to nascent proteins by oligosaccharyltransferases. On the cytoplasmic face of the endoplasmic reticulum, the dimeric ALG13/ALG14 complex catalyzes the second step of dolichol pyrophosphate biosynthesis, transferring a beta1,4-linked N-acetylglucosamine (GlcNAc) from UDP-GlcNAc to GlcNAc-pyrophosphatedolichol (Gn-PDol) to produce N,N'-diacetylchitobiosyl diphosphodolichol. N,N'-diacetylchitobiosyl diphosphodolichol is a substrate for ALG1, the following enzyme in the biosynthetic pathway. In terms of biological role, no glycosyltransferase or deubiquitinase activity is detected for this potential multifunctional enzyme. The sequence is that of UDP-N-acetylglucosamine transferase subunit ALG13 from Homo sapiens (Human).